The primary structure comprises 300 residues: Probable protein phosphatase 2C 3 (300 aa).

The PPM-type phosphatase domain maps to 23-298 (IFAASEMQGW…DNMTTILVYL (276 aa)). 4 residues coordinate Mn(2+): D57, G58, D237, and D289.

This sequence belongs to the PP2C family. Mg(2+) serves as cofactor. It depends on Mn(2+) as a cofactor.

The protein resides in the membrane. It carries out the reaction O-phospho-L-seryl-[protein] + H2O = L-seryl-[protein] + phosphate. The enzyme catalyses O-phospho-L-threonyl-[protein] + H2O = L-threonyl-[protein] + phosphate. Enzyme with a broad specificity. The polypeptide is Probable protein phosphatase 2C 3 (Paramecium tetraurelia).